A 333-amino-acid chain; its full sequence is MLKPMYYEFFFIFPKERELFESFLLDATHLALEESSLENLKAFDDKETIGFISQSNWHYFATHDPLKKDLKENLKEKPPHLKNFVILRSQKDLNNSLIPALEAFCLNLKQNLQSEFDFFYLSRNLASKDWLEAYKQAILPVQCTKFYIHPSWHQKPSHVVTNDCIMIDPALAFGSGHHESTSMCLELLSDIDLKRKNALDVGCGSGILSIALKKQGVSALVACDTDSLAVEETLKNFSLNQIPLLVQDKVIYGSTQKIEGRFDVIVANLVADVIKSLYSEFVRLCNHTLILSGILETHLNSVLQIYYNGFEVLEQRQRNEWVALKLLKKQPIN.

S-adenosyl-L-methionine-binding residues include threonine 181, glycine 202, aspartate 224, and asparagine 268.

It belongs to the methyltransferase superfamily. PrmA family.

The protein localises to the cytoplasm. The catalysed reaction is L-lysyl-[protein] + 3 S-adenosyl-L-methionine = N(6),N(6),N(6)-trimethyl-L-lysyl-[protein] + 3 S-adenosyl-L-homocysteine + 3 H(+). In terms of biological role, methylates ribosomal protein L11. The chain is Ribosomal protein L11 methyltransferase from Helicobacter pylori (strain ATCC 700392 / 26695) (Campylobacter pylori).